The chain runs to 95 residues: Small ribosomal subunit protein bS6 (95 aa).

The protein belongs to the bacterial ribosomal protein bS6 family.

In terms of biological role, binds together with bS18 to 16S ribosomal RNA. This chain is Small ribosomal subunit protein bS6, found in Geobacillus sp. (strain WCH70).